A 629-amino-acid polypeptide reads, in one-letter code: Pescadillo homolog (629 aa).

Residues arginine 321–isoleucine 414 enclose the BRCT domain. 3 disordered regions span residues lysine 439–aspartate 470, glutamate 488–proline 568, and isoleucine 598–lysine 629. Residues serine 453 and serine 457 each carry the phosphoserine modification. Composition is skewed to acidic residues over residues aspartate 454–aspartate 470 and valine 498–aspartate 523. Basic and acidic residues predominate over residues glutamate 524–lysine 535. The segment covering lysine 542–valine 551 has biased composition (basic residues). Composition is skewed to basic and acidic residues over residues histidine 552–leucine 561 and isoleucine 598–alanine 617. Positions lysine 584–leucine 627 form a coiled coil. Positions alanine 618 to lysine 629 are enriched in low complexity.

Belongs to the pescadillo family.

Its subcellular location is the nucleus. The protein localises to the nucleolus. It is found in the nucleoplasm. In terms of biological role, required for maturation of ribosomal RNAs and formation of the large ribosomal subunit. The polypeptide is Pescadillo homolog (Drosophila erecta (Fruit fly)).